Reading from the N-terminus, the 428-residue chain is MKIINEDLASLKRLVQTKTQQLTDLKVESAVREIIANVIKNGDAAVKDYETQFDKVTLTDFKLSQTVIDDAYNNLDPQVKDALLLAKRNITSFHEKEKATGFIDAEQPGVLRGQKLMPLNRVGLYVPGGTAAYPSTLLMSALPAKIAGVNEVIMVTPPQVDGINPAVLAAAKIAGVDAIYQVGGAQAIAALAYGTESIPAVDKIIGPGNIFVATAKKQVFGQVAIDMVAGPSEIGILADDSADPRQLAADLLSQAEHDRRARPILITDSADLAQAVSDNVTSQLKVLPREAIATDAVNEKGFIAVVAKIEEMFDLMNTVAPEHLEVQLKNPTQYLNLIKNAGSVFLGRYASEPLGDYVAGPNHILPTSGTARFSSPLGVYDFVKRTSFIQYTKDALAKEAPAITTLARVEGLEGHARAIESRFDTYYD.

3 residues coordinate NAD(+): tyrosine 125, glutamine 186, and asparagine 209. Substrate contacts are provided by serine 232, glutamine 254, and histidine 257. The Zn(2+) site is built by glutamine 254 and histidine 257. Active-site proton acceptor residues include glutamate 322 and histidine 323. Substrate contacts are provided by histidine 323, aspartate 356, glutamate 410, and histidine 415. Aspartate 356 serves as a coordination point for Zn(2+). Histidine 415 serves as a coordination point for Zn(2+).

This sequence belongs to the histidinol dehydrogenase family. The cofactor is Zn(2+).

It carries out the reaction L-histidinol + 2 NAD(+) + H2O = L-histidine + 2 NADH + 3 H(+). It functions in the pathway amino-acid biosynthesis; L-histidine biosynthesis; L-histidine from 5-phospho-alpha-D-ribose 1-diphosphate: step 9/9. Its function is as follows. Catalyzes the sequential NAD-dependent oxidations of L-histidinol to L-histidinaldehyde and then to L-histidine. The polypeptide is Histidinol dehydrogenase (Lactiplantibacillus plantarum (strain ATCC BAA-793 / NCIMB 8826 / WCFS1) (Lactobacillus plantarum)).